We begin with the raw amino-acid sequence, 591 residues long: V-type ATP synthase alpha chain (591 aa).

An ATP-binding site is contributed by 232-239 (GPFGAGKT).

Belongs to the ATPase alpha/beta chains family.

It carries out the reaction ATP + H2O + 4 H(+)(in) = ADP + phosphate + 5 H(+)(out). Produces ATP from ADP in the presence of a proton gradient across the membrane. The V-type alpha chain is a catalytic subunit. The chain is V-type ATP synthase alpha chain from Clostridium perfringens (strain SM101 / Type A).